The sequence spans 149 residues: Large ribosomal subunit protein uL15 (149 aa).

The interval 30–63 (GLGKTAGRGHKGSFARKGGGKIKPGFEGGQTPMQ) is disordered. Residues 36–49 (GRGHKGSFARKGGG) are compositionally biased toward basic residues.

This sequence belongs to the universal ribosomal protein uL15 family. As to quaternary structure, part of the 50S ribosomal subunit.

In terms of biological role, binds to the 23S rRNA. The chain is Large ribosomal subunit protein uL15 from Xylella fastidiosa (strain 9a5c).